Consider the following 236-residue polypeptide: Class B acid phosphatase (236 aa).

The N-terminal stretch at 1-22 is a signal peptide; it reads MNHTLRSITLVLACVASLSANA. Catalysis depends on Asp70, which acts as the Nucleophile. 2 residues coordinate Mg(2+): Asp70 and Asp72. Asp72 (proton donor) is an active-site residue. Substrate is bound by residues 138 to 139 and Lys176; that span reads TG. Residue Asp191 participates in Mg(2+) binding.

Belongs to the class B bacterial acid phosphatase family. Homotetramer. It depends on Mg(2+) as a cofactor.

The protein resides in the periplasm. The enzyme catalyses a phosphate monoester + H2O = an alcohol + phosphate. Functionally, dephosphorylates several organic phosphate monoesters. Also has a phosphotransferase activity catalyzing the transfer of low-energy phosphate groups from organic phosphate monoesters to free hydroxyl groups of various organic compounds. This is Class B acid phosphatase from Marinomonas sp. (strain MWYL1).